A 179-amino-acid chain; its full sequence is ATP synthase subunit delta (179 aa).

It belongs to the ATPase delta chain family. F-type ATPases have 2 components, F(1) - the catalytic core - and F(0) - the membrane proton channel. F(1) has five subunits: alpha(3), beta(3), gamma(1), delta(1), epsilon(1). F(0) has three main subunits: a(1), b(2) and c(10-14). The alpha and beta chains form an alternating ring which encloses part of the gamma chain. F(1) is attached to F(0) by a central stalk formed by the gamma and epsilon chains, while a peripheral stalk is formed by the delta and b chains.

It localises to the cell membrane. In terms of biological role, f(1)F(0) ATP synthase produces ATP from ADP in the presence of a proton or sodium gradient. F-type ATPases consist of two structural domains, F(1) containing the extramembraneous catalytic core and F(0) containing the membrane proton channel, linked together by a central stalk and a peripheral stalk. During catalysis, ATP synthesis in the catalytic domain of F(1) is coupled via a rotary mechanism of the central stalk subunits to proton translocation. Its function is as follows. This protein is part of the stalk that links CF(0) to CF(1). It either transmits conformational changes from CF(0) to CF(1) or is implicated in proton conduction. This Staphylococcus epidermidis (strain ATCC 35984 / DSM 28319 / BCRC 17069 / CCUG 31568 / BM 3577 / RP62A) protein is ATP synthase subunit delta.